The sequence spans 417 residues: MVLLKKGFAILAASFLAIGLAACSSSKNPASSDGKKVLTVSVEETYKEYIESIKTKFEKENDVTVKIVEKQMFEQLEALPLDGPAGNAPDVMLAAYDRIGGLGQQGHLLDIKPSNTKSFGDKEMQQVTVDGKVYGMPLVIETLILYYNKDLLKTAPKTFKDLEKLTEDPRFAFASEKGKSTGFLAKWTDFYMSYGLLAGYGGYVFGKNGTDSGDIGLNNKGAVEAVKYAEKWFETYWPKGMQDNSSADDFIQQMFLEGKAAAIIGGPWSAANYKEAKLNYGAAPIPTLPNGEEYAPFAGGKGWVASKYTKEPELAEKWLEYAANDANAYAFYEDTNEVPANTAARKKADEQKNELTSAVIKQYETATPTPNIPEMAEVWTGAESLIFDAASGKKSTQTSANDAVNVIKENIKEKYVK.

The N-terminal stretch at 1 to 22 (MVLLKKGFAILAASFLAIGLAA) is a signal peptide. Cys-23 carries the N-palmitoyl cysteine lipid modification. A lipid anchor (S-diacylglycerol cysteine) is attached at Cys-23.

The protein belongs to the bacterial solute-binding protein 1 family. As to quaternary structure, the complex is composed of two ATP-binding proteins (MsmX), two transmembrane proteins (MdxF and MdxG) and a solute-binding protein (MdxE).

It is found in the cell membrane. Inhibited by glucose and lactose. Its function is as follows. Part of the ABC transporter complex involved in maltodextrin import. Binds maltodextrin. Can also bind maltose with low affinity, but is not involved in its uptake. The sequence is that of Maltodextrin-binding protein MdxE (mdxE) from Bacillus subtilis (strain 168).